A 360-amino-acid chain; its full sequence is MRVFNFSAGPAALPEEVLRQAADEMLDWHGSGMSVMEMSHRGKEFMSIHEAALADLRELLDVPASHRILFLQGGGIAENAIVPMNLLGSRKTADFVVTGSWSQKSFNEAKKYGTPHLAASGKTADGFTRAPARAEWQLSDDPAYVHLCTNETIDGVETFEIPDLGDVPLVADVSSHILSRPMDVAKYGVLFGGAQKNIGMAGVTVVIVREDLLDRALSICPSAFEWKTVAANNSLYNTPPTYAIYIAGLVFQWLKRQGGLEAIEARNIEKAKLLYDTIDASGFYLNKVEPAVRSRMNVPFFLADETRNEDFLAGAKARGLLQLKGHKSVGGMRASIYNAVPLEGVKALVEYMKDFEQRGA.

Arginine 41 is a binding site for L-glutamate. The pyridoxal 5'-phosphate site is built by tryptophan 101, threonine 152, aspartate 172, and glutamine 195. N6-(pyridoxal phosphate)lysine is present on lysine 196. 237-238 (NT) contacts pyridoxal 5'-phosphate.

This sequence belongs to the class-V pyridoxal-phosphate-dependent aminotransferase family. SerC subfamily. In terms of assembly, homodimer. It depends on pyridoxal 5'-phosphate as a cofactor.

The protein resides in the cytoplasm. The enzyme catalyses O-phospho-L-serine + 2-oxoglutarate = 3-phosphooxypyruvate + L-glutamate. It carries out the reaction 4-(phosphooxy)-L-threonine + 2-oxoglutarate = (R)-3-hydroxy-2-oxo-4-phosphooxybutanoate + L-glutamate. The protein operates within amino-acid biosynthesis; L-serine biosynthesis; L-serine from 3-phospho-D-glycerate: step 2/3. It participates in cofactor biosynthesis; pyridoxine 5'-phosphate biosynthesis; pyridoxine 5'-phosphate from D-erythrose 4-phosphate: step 3/5. Its function is as follows. Catalyzes the reversible conversion of 3-phosphohydroxypyruvate to phosphoserine and of 3-hydroxy-2-oxo-4-phosphonooxybutanoate to phosphohydroxythreonine. This is Phosphoserine aminotransferase from Burkholderia ambifaria (strain MC40-6).